A 1110-amino-acid chain; its full sequence is cGMP-specific 3',5'-cyclic phosphodiesterase (1110 aa).

2 stretches are compositionally biased toward low complexity: residues 1–25 (MTDVSAAAGGATAPAETAATSSSAS) and 35–55 (TSTAMAAPTATPTTAATASGA). Disordered regions lie at residues 1–55 (MTDV…ASGA), 67–128 (ISNQ…QQDV), and 184–203 (ASPTVQQKSPRSLSNSSASS). Over residues 88-103 (APYPPVPAAKPKPTPT) the composition is skewed to pro residues. Residues 192–203 (SPRSLSNSSASS) show a composition bias toward low complexity. GAF domains are found at residues 233-385 (DIDV…GIGI) and 417-601 (NLEC…GLGI). A PDEase domain is found at 631–954 (SQDQTEKLTQ…RNWQDLAEKV (324 aa)). Histidine 707 (proton donor) is an active-site residue. 4 residues coordinate a divalent metal cation: histidine 711, histidine 747, aspartate 748, and aspartate 858. 2 disordered regions span residues 997 to 1028 (AQHGAGAGGDDSHTPEHQRSGSRLSMKKTGAL) and 1040 to 1110 (LYNS…CSLL). Composition is skewed to basic and acidic residues over residues 1006 to 1015 (DDSHTPEHQR) and 1056 to 1068 (LESHVSEDMDDKS). The span at 1082 to 1097 (GRMSASSSTSSAGTVV) shows a compositional bias: low complexity. The span at 1100–1110 (SKKRSKLCSLL) shows a compositional bias: basic residues. Position 1107 is a cysteine methyl ester (cysteine 1107). Cysteine 1107 carries the S-farnesyl cysteine lipid modification. Positions 1108–1110 (SLL) are cleaved as a propeptide — removed in mature form.

It belongs to the cyclic nucleotide phosphodiesterase family. In terms of assembly, interacts with PrBP. A divalent metal cation serves as cofactor.

The protein localises to the cell membrane. It carries out the reaction 3',5'-cyclic GMP + H2O = GMP + H(+). Functionally, has a role regulating cGMP transport in Malpighian tubule principal cells. The protein is cGMP-specific 3',5'-cyclic phosphodiesterase of Drosophila pseudoobscura pseudoobscura (Fruit fly).